Reading from the N-terminus, the 114-residue chain is Iron-sulfur cluster insertion protein ErpA (114 aa).

Positions 42, 106, and 108 each coordinate iron-sulfur cluster.

Belongs to the HesB/IscA family. In terms of assembly, homodimer. The cofactor is iron-sulfur cluster.

Functionally, required for insertion of 4Fe-4S clusters for at least IspG. The protein is Iron-sulfur cluster insertion protein ErpA of Hamiltonella defensa subsp. Acyrthosiphon pisum (strain 5AT).